A 430-amino-acid polypeptide reads, in one-letter code: Glucose-6-phosphate isomerase (430 aa).

Glu284 serves as the catalytic Proton donor. Catalysis depends on residues His305 and Lys420.

It belongs to the GPI family.

The protein resides in the cytoplasm. The catalysed reaction is alpha-D-glucose 6-phosphate = beta-D-fructose 6-phosphate. The protein operates within carbohydrate biosynthesis; gluconeogenesis. It participates in carbohydrate degradation; glycolysis; D-glyceraldehyde 3-phosphate and glycerone phosphate from D-glucose: step 2/4. In terms of biological role, catalyzes the reversible isomerization of glucose-6-phosphate to fructose-6-phosphate. The polypeptide is Glucose-6-phosphate isomerase (Mycoplasmopsis synoviae (strain 53) (Mycoplasma synoviae)).